We begin with the raw amino-acid sequence, 523 residues long: Leucine-rich repeat-containing protein 27 (523 aa).

The tract at residues 1 to 26 (MEDTSPQAVAEKAAKDPKAAKDLKDD) is disordered. Basic and acidic residues predominate over residues 12 to 26 (KAAKDPKAAKDLKDD). LRR repeat units lie at residues 55–76 (SSPV…FKIP), 77–98 (NLQQ…FFQL), 101–122 (NLTW…IGSH), 124–145 (HLKT…LGQV), and 147–168 (TLTA…IVQK). Disordered stretches follow at residues 206-236 (QYPV…ADFF) and 372-394 (REQT…HSNM). 2 stretches are compositionally biased toward basic and acidic residues: residues 227-236 (DQEKEKADFF) and 372-385 (REQT…RELS). 2 coiled-coil regions span residues 335 to 374 (VHAN…WREQ) and 463 to 494 (MQDI…TLNK). Positions 503 to 523 (GNLSLHPPASQPQNIFFNTKS) are disordered. Residues 513-523 (QPQNIFFNTKS) are compositionally biased toward polar residues.

This is Leucine-rich repeat-containing protein 27 (Lrrc27) from Mus musculus (Mouse).